We begin with the raw amino-acid sequence, 305 residues long: Ribosomal RNA small subunit methyltransferase H (305 aa).

Residues Gly33–Tyr35, Asp51, Phe78, Asp96, and Gln103 contribute to the S-adenosyl-L-methionine site.

It belongs to the methyltransferase superfamily. RsmH family.

It localises to the cytoplasm. It carries out the reaction cytidine(1402) in 16S rRNA + S-adenosyl-L-methionine = N(4)-methylcytidine(1402) in 16S rRNA + S-adenosyl-L-homocysteine + H(+). Specifically methylates the N4 position of cytidine in position 1402 (C1402) of 16S rRNA. In Rickettsia bellii (strain RML369-C), this protein is Ribosomal RNA small subunit methyltransferase H.